A 417-amino-acid chain; its full sequence is Multifunctional CCA protein (417 aa).

ATP contacts are provided by G8 and R11. The CTP site is built by G8 and R11. 2 residues coordinate Mg(2+): D21 and D23. ATP-binding residues include R91, R137, and R140. R91, R137, and R140 together coordinate CTP. The 102-residue stretch at 225-326 (SGIHTLMTLQ…LNVLKKTDAF (102 aa)) folds into the HD domain.

Belongs to the tRNA nucleotidyltransferase/poly(A) polymerase family. Bacterial CCA-adding enzyme type 1 subfamily. In terms of assembly, monomer. Can also form homodimers and oligomers. Mg(2+) serves as cofactor. It depends on Ni(2+) as a cofactor.

The catalysed reaction is a tRNA precursor + 2 CTP + ATP = a tRNA with a 3' CCA end + 3 diphosphate. It catalyses the reaction a tRNA with a 3' CCA end + 2 CTP + ATP = a tRNA with a 3' CCACCA end + 3 diphosphate. Functionally, catalyzes the addition and repair of the essential 3'-terminal CCA sequence in tRNAs without using a nucleic acid template. Adds these three nucleotides in the order of C, C, and A to the tRNA nucleotide-73, using CTP and ATP as substrates and producing inorganic pyrophosphate. tRNA 3'-terminal CCA addition is required both for tRNA processing and repair. Also involved in tRNA surveillance by mediating tandem CCA addition to generate a CCACCA at the 3' terminus of unstable tRNAs. While stable tRNAs receive only 3'-terminal CCA, unstable tRNAs are marked with CCACCA and rapidly degraded. In Neisseria meningitidis serogroup C (strain 053442), this protein is Multifunctional CCA protein.